The chain runs to 156 residues: Rhombotin-1 (156 aa).

2 LIM zinc-binding domains span residues 24 to 83 (CAGC…RLFG) and 88 to 147 (CAAC…EGQL).

In terms of tissue distribution, expressed mainly in the central nervous. Low level of expression in other tissues including thymus.

Its subcellular location is the nucleus. Its function is as follows. May be involved in gene regulation within neural lineage cells potentially by direct DNA binding or by binding to other transcription factors. The protein is Rhombotin-1 (LMO1) of Homo sapiens (Human).